A 483-amino-acid chain; its full sequence is Cysteine--tRNA ligase (483 aa).

Cysteine 29 provides a ligand contact to Zn(2+). A 'HIGH' region motif is present at residues 31-41 (PTVYGHAHLGH). Positions 221, 246, and 250 each coordinate Zn(2+). The short motif at 278-282 (KMGKS) is the 'KMSKS' region element. Residue lysine 281 coordinates ATP.

It belongs to the class-I aminoacyl-tRNA synthetase family. In terms of assembly, monomer. It depends on Zn(2+) as a cofactor.

It localises to the cytoplasm. The enzyme catalyses tRNA(Cys) + L-cysteine + ATP = L-cysteinyl-tRNA(Cys) + AMP + diphosphate. The sequence is that of Cysteine--tRNA ligase from Chlorobium luteolum (strain DSM 273 / BCRC 81028 / 2530) (Pelodictyon luteolum).